Here is a 153-residue protein sequence, read N- to C-terminus: Ribonuclease 2 (153 aa).

The protein belongs to the BetVI family.

Its subcellular location is the cytoplasm. In terms of biological role, catalyzes the two-stage endonucleolytic cleavage to 3'-phosphomononucleotides and 3'-phosphooligonucleotides with 2',3'-cyclic phosphate intermediates. In Panax ginseng (Korean ginseng), this protein is Ribonuclease 2.